The sequence spans 416 residues: Putative nucleoside permease NupX (416 aa).

At M1–D2 the chain is on the periplasmic side. The chain crosses the membrane as a helical span at residues V3 to N23. Residues K24–T31 lie on the Cytoplasmic side of the membrane. Residues V32–G52 form a helical membrane-spanning segment. Residues R53–F95 are Periplasmic-facing. The chain crosses the membrane as a helical span at residues I96–I118. The Cytoplasmic segment spans residues G119–E172. Residues L173 to A193 form a helical membrane-spanning segment. The Periplasmic segment spans residues A194 to G196. Residues V197–A217 traverse the membrane as a helical segment. Residues R218–E246 are Cytoplasmic-facing. The helical transmembrane segment at A247–M267 threads the bilayer. Over A268–T352 the chain is Periplasmic. The chain crosses the membrane as a helical span at residues V353–V373. The Cytoplasmic portion of the chain corresponds to G374–A394. A helical membrane pass occupies residues L395–L415. Residue A416 is a topological domain, periplasmic.

It belongs to the concentrative nucleoside transporter (CNT) (TC 2.A.41) family.

Its subcellular location is the cell inner membrane. The sequence is that of Putative nucleoside permease NupX (nupX) from Escherichia coli (strain K12).